Consider the following 2190-residue polypeptide: Non-reducing polyketide synthase mapC' (2190 aa).

Positions 14–268 (VLFGPQCPDI…HHEAHREGIQ (255 aa)) are N-terminal acylcarrier protein transacylase domain (SAT). The region spanning 401-817 (ASPIAITGMA…GSNAALIVKE (417 aa)) is the Ketosynthase family 3 (KS3) domain. Active-site for beta-ketoacyl synthase activity residues include Cys-566, His-701, and His-740. A malonyl-CoA:ACP transacylase (MAT) domain region spans residues 893-1190 (CFGGQNGLTA…NVTSALWAQG (298 aa)). The active-site For acyl/malonyl transferase activity is Ser-979. The segment at 1243–1375 (GQEAGLLCQL…GTVCLHQERS (133 aa)) is N-terminal hotdog fold. The PKS/mFAS DH domain maps to 1243 to 1552 (GQEAGLLCQL…FTSVSIRSLT (310 aa)). Residues 1251 to 1556 (QLSESPDERL…SIRSLTRALA (306 aa)) are product template (PT) domain. Catalysis depends on His-1277, which acts as the Proton acceptor; for dehydratase activity. Positions 1401-1552 (ASNGLKGSTV…FTSVSIRSLT (152 aa)) are C-terminal hotdog fold. The Proton donor; for dehydratase activity role is filled by Asp-1458. A Carrier domain is found at 1597 to 1671 (ANDLATVQEM…GLVEHIFPGH (75 aa)). The residue at position 1631 (Ser-1631) is an O-(pantetheine 4'-phosphoryl)serine. The interval 1840-2187 (ATMSPSKPIK…AEGYEFLRTH (348 aa)) is methyltransferase (CMeT) domain. Active-site for thioesterase activity residues include Ser-1969, Asp-2127, and His-2159.

The protein resides in the cytoplasm. It localises to the cytosol. The catalysed reaction is 3 malonyl-CoA + acetyl-CoA + S-adenosyl-L-methionine + H(+) = 5-methylorsellinate + S-adenosyl-L-homocysteine + 3 CO2 + 4 CoA. The protein operates within secondary metabolite biosynthesis; terpenoid biosynthesis. Functionally, non-reducing polyketide synthase; part of the gene cluster that mediates the biosynthesis of mycophenolic acid (MPA), the first isolated antibiotic natural product in the world obtained from a culture of Penicillium brevicompactum in 1893. MpaC' catalyzes the synthesis of 5-methylorsellinic acid (5MOA) via the condensation of 1 acetyl-CoA starter unit with 3 malonyl-CoA units and one methylation step. The first step of the pathway is the synthesis of 5-methylorsellinic acid (5MOA) by the cytosolic polyketide synthase mpaC. 5MOA is then converted to the phthalide compound 5,7-dihydroxy-4,6-dimethylphthalide (DHMP) by the endoplasmic reticulum-bound cytochrome P450 monooxygenase mpaDE. MpaDE first catalyzes hydroxylation of 5-MOA to 4,6-dihydroxy-2-(hydroxymethyl)-3-methylbenzoic acid (DHMB). MpaDE then acts as a lactone synthase that catalyzes the ring closure to convert DHMB into DHMP. The next step is the prenylation of DHMP by the Golgi apparatus-associated prenyltransferase mpaA to yield farnesyl-DHMP (FDHMP). The ER-bound oxygenase mpaB then mediates the oxidative cleavage the C19-C20 double bond in FDHMP to yield FDHMP-3C via a mycophenolic aldehyde intermediate. The O-methyltransferase mpaG catalyzes the methylation of FDHMP-3C to yield MFDHMP-3C. After the cytosolic methylation of FDHMP-3C, MFDHMP-3C enters into peroxisomes probably via free diffusion due to its low molecular weight. Upon a peroxisomal CoA ligation reaction, catalyzed by a beta-oxidation component enzyme acyl-CoA ligase ACL891, MFDHMP-3C-CoA would then be restricted to peroxisomes for the following beta-oxidation pathway steps. The peroxisomal beta-oxidation machinery than converts MFDHMP-3C-CoA into MPA_CoA, via a beta-oxidation chain-shortening process. Finally mpaH acts as a peroxisomal acyl-CoA hydrolase with high substrate specificity toward MPA-CoA to release the final product MPA. This is Non-reducing polyketide synthase mapC' from Penicillium brevicompactum.